The following is a 210-amino-acid chain: Ribosomal RNA small subunit methyltransferase G (210 aa).

S-adenosyl-L-methionine contacts are provided by residues glycine 77, phenylalanine 82, 100–102 (ERS), 128–129 (VE), and arginine 141.

Belongs to the methyltransferase superfamily. RNA methyltransferase RsmG family.

It is found in the cytoplasm. Specifically methylates the N7 position of a guanine in 16S rRNA. This Borrelia recurrentis (strain A1) protein is Ribosomal RNA small subunit methyltransferase G.